The primary structure comprises 208 residues: Guanylate kinase (208 aa).

A Guanylate kinase-like domain is found at Gly-21–Val-201. Gly-28–Ser-35 serves as a coordination point for ATP.

It belongs to the guanylate kinase family.

The protein localises to the cytoplasm. It catalyses the reaction GMP + ATP = GDP + ADP. Its function is as follows. Essential for recycling GMP and indirectly, cGMP. In Mycobacterium bovis (strain ATCC BAA-935 / AF2122/97), this protein is Guanylate kinase (gmk).